A 193-amino-acid chain; its full sequence is MLHLLVGLGNPGKEYELTRHNVGFMIIDAIMHHFLFPDFKKKHNALISSGSIQSYKVILAKPYTFMNNSGAPISSIVKLYKIPLDNIIVFHDETDIDFCTIRIKKGGGNAGHNGLKSIDTLLGRDYWRIRFGIGHPSNGYDLSYHVLSQFNNLNAVNNTISNIIEHISLLFENDKSIFKNKVKDLIKYTDISS.

Tyr15 serves as a coordination point for tRNA. The active-site Proton acceptor is His20. The tRNA site is built by Phe65, Asn67, and Asn113.

It belongs to the PTH family. In terms of assembly, monomer.

It localises to the cytoplasm. The enzyme catalyses an N-acyl-L-alpha-aminoacyl-tRNA + H2O = an N-acyl-L-amino acid + a tRNA + H(+). Hydrolyzes ribosome-free peptidyl-tRNAs (with 1 or more amino acids incorporated), which drop off the ribosome during protein synthesis, or as a result of ribosome stalling. Functionally, catalyzes the release of premature peptidyl moieties from peptidyl-tRNA molecules trapped in stalled 50S ribosomal subunits, and thus maintains levels of free tRNAs and 50S ribosomes. The polypeptide is Peptidyl-tRNA hydrolase (Ehrlichia ruminantium (strain Gardel)).